The following is a 137-amino-acid chain: Thioredoxin-like protein R548 (137 aa).

The Thioredoxin domain occupies 2 to 137 (SKDSVETNTI…LEKSIVESSQ (136 aa)). Residues C61 and C64 each act as nucleophile in the active site. A disulfide bridge connects residues C61 and C64.

This sequence belongs to the thioredoxin family.

In terms of biological role, participates in various redox reactions through the reversible oxidation of its active center dithiol to a disulfide and catalyzes dithiol-disulfide exchange reactions. The protein is Thioredoxin-like protein R548 of Acanthamoeba polyphaga mimivirus (APMV).